Reading from the N-terminus, the 296-residue chain is tRNA dimethylallyltransferase (296 aa).

Residue 2 to 9 (GPTASGKT) coordinates ATP. Position 4 to 9 (4 to 9 (TASGKT)) interacts with substrate. Interaction with substrate tRNA regions lie at residues 27 to 30 (DSAL), 151 to 155 (QRLSR), and 232 to 237 (RCVGYR).

The protein belongs to the IPP transferase family. As to quaternary structure, monomer. The cofactor is Mg(2+).

The catalysed reaction is adenosine(37) in tRNA + dimethylallyl diphosphate = N(6)-dimethylallyladenosine(37) in tRNA + diphosphate. Catalyzes the transfer of a dimethylallyl group onto the adenine at position 37 in tRNAs that read codons beginning with uridine, leading to the formation of N6-(dimethylallyl)adenosine (i(6)A). The polypeptide is tRNA dimethylallyltransferase (Shewanella sp. (strain MR-4)).